The chain runs to 245 residues: Anti-Pycsar protein Apyc1 (245 aa).

Residues Phe19–His219 are beta-lactamase-like. Zn(2+) contacts are provided by His61, His63, Asp65, His66, His145, Asp165, and His219.

It belongs to the anti-Pycsar protein Apyc1 family. In terms of assembly, homodimer. Zn(2+) serves as cofactor.

The catalysed reaction is 3',5'-cyclic CMP + H2O = CMP + H(+). It catalyses the reaction 3',5'-cyclic UMP + H2O = UMP + H(+). In terms of biological role, counteracts the endogenous Pycsar antiviral defense system. Phosphodiesterase that enables metal-dependent hydrolysis of host cyclic nucleotide Pycsar defense signals such as cCMP and cUMP. This Paenibacillus sp. (strain J14) protein is Anti-Pycsar protein Apyc1.